Here is a 280-residue protein sequence, read N- to C-terminus: MKIKAYAKINLSLDIVGVREDGYHLLEMVMQTIDLYDVVHLNIKDKDIEINSNNCNIPLDNRNLAYKAAKLFKETFNIKEGVEIYIEKNIPIEAGLAGGSSDAAAVLRGLRDIFMPNLNNKELAKIGVRIGADVPYCIYGGTAFCEGIGEKITKLNPFKDHYLVLVKPDFGICTKETYSKIDKKEIIKHPDTKEIIKSIGENNLKLLCKNMENILEIVTLEERSNLKDIKKELLQYGSLGAQMTGSGPTIFGFFPYRDSAENCYRKMKSKYNEVYISKTI.

Residue lysine 8 is part of the active site. Position 91 to 101 (91 to 101) interacts with ATP; it reads PIEAGLAGGSS. Residue aspartate 133 is part of the active site.

The protein belongs to the GHMP kinase family. IspE subfamily.

It carries out the reaction 4-CDP-2-C-methyl-D-erythritol + ATP = 4-CDP-2-C-methyl-D-erythritol 2-phosphate + ADP + H(+). The protein operates within isoprenoid biosynthesis; isopentenyl diphosphate biosynthesis via DXP pathway; isopentenyl diphosphate from 1-deoxy-D-xylulose 5-phosphate: step 3/6. In terms of biological role, catalyzes the phosphorylation of the position 2 hydroxy group of 4-diphosphocytidyl-2C-methyl-D-erythritol. This is 4-diphosphocytidyl-2-C-methyl-D-erythritol kinase from Clostridium tetani (strain Massachusetts / E88).